A 306-amino-acid polypeptide reads, in one-letter code: UDP-3-O-acyl-N-acetylglucosamine deacetylase (306 aa).

3 residues coordinate Zn(2+): H79, H238, and D242. H265 (proton donor) is an active-site residue.

It belongs to the LpxC family. Zn(2+) is required as a cofactor.

It catalyses the reaction a UDP-3-O-[(3R)-3-hydroxyacyl]-N-acetyl-alpha-D-glucosamine + H2O = a UDP-3-O-[(3R)-3-hydroxyacyl]-alpha-D-glucosamine + acetate. The protein operates within glycolipid biosynthesis; lipid IV(A) biosynthesis; lipid IV(A) from (3R)-3-hydroxytetradecanoyl-[acyl-carrier-protein] and UDP-N-acetyl-alpha-D-glucosamine: step 2/6. In terms of biological role, catalyzes the hydrolysis of UDP-3-O-myristoyl-N-acetylglucosamine to form UDP-3-O-myristoylglucosamine and acetate, the committed step in lipid A biosynthesis. The sequence is that of UDP-3-O-acyl-N-acetylglucosamine deacetylase from Shewanella oneidensis (strain ATCC 700550 / JCM 31522 / CIP 106686 / LMG 19005 / NCIMB 14063 / MR-1).